We begin with the raw amino-acid sequence, 185 residues long: Ribosome-recycling factor (185 aa).

It belongs to the RRF family.

It localises to the cytoplasm. Responsible for the release of ribosomes from messenger RNA at the termination of protein biosynthesis. May increase the efficiency of translation by recycling ribosomes from one round of translation to another. The sequence is that of Ribosome-recycling factor from Clostridium novyi (strain NT).